The sequence spans 356 residues: Rhomboid-related protein 1 (356 aa).

A run of 7 helical transmembrane segments spans residues 107–129, 172–194, 201–223, 227–249, 256–275, 290–312, and 319–341; these read WCPPPIFMLLITIIQVGIFFFYW, YMFLHAGLNHLLGNVIIQLLVGI, KIWRIGPIYLLAVTSGSLLQYAI, SLLVGASAGVYALIFAHVANVIL, LRWIRVLVLFVFIFLDFGGA, HLAHIAGAVTGLFFGYVVLYNVV, and IIRYVCLFLYSAFFATTIIFVIV. Ser-233 serves as the catalytic Nucleophile. The active site involves His-293.

Belongs to the peptidase S54 family.

It localises to the membrane. The enzyme catalyses Cleaves type-1 transmembrane domains using a catalytic dyad composed of serine and histidine that are contributed by different transmembrane domains.. Its function is as follows. Serine protease which activates lin-3 isoform a in the proximal vulva precursor cells (VPC) during vulva development to transmit the inductive anchor cell signal to the distal VPCs. This is Rhomboid-related protein 1 from Caenorhabditis elegans.